The primary structure comprises 404 residues: MNKPIPNSLRTLPDDRGRFGEFGGRFVAETLMPLILELEAAYEAAKDDPDFMREFQYYLQHYVGRPSPLWFAERLTKELGGAKVYFKRDELNHTGAHKINNCIGQILLAKRMGKTRIIAETGAGQHGVATATVAALFGLPCIVYMGATDVERQQPNVFRMKLLGAEVRPVTSGASTLKDAMNEALRDWVANVRDTFYIIGTAAGPHPYPAMVRDFQSVIGVEARAQMMEAEGRLPDVAIAAIGGGSNAIGLFHAFLDEQVKLIGVEAAGRGLDSGEHAASLSRGRPGVLHGNRTYLLQDDDGQILEAHSISAGLDYPGIGPEHSYLHDIGRVEYVSATDDEALAAFQLCCRTEGIIPALEPSHALAHVAKIAPGMDKESIILMNLCGRGDKDIFTVARHLGEQI.

Lysine 98 is subject to N6-(pyridoxal phosphate)lysine.

The protein belongs to the TrpB family. As to quaternary structure, tetramer of two alpha and two beta chains. It depends on pyridoxal 5'-phosphate as a cofactor.

The enzyme catalyses (1S,2R)-1-C-(indol-3-yl)glycerol 3-phosphate + L-serine = D-glyceraldehyde 3-phosphate + L-tryptophan + H2O. It functions in the pathway amino-acid biosynthesis; L-tryptophan biosynthesis; L-tryptophan from chorismate: step 5/5. In terms of biological role, the beta subunit is responsible for the synthesis of L-tryptophan from indole and L-serine. In Acidiphilium cryptum (strain JF-5), this protein is Tryptophan synthase beta chain.